A 570-amino-acid chain; its full sequence is MISGILASPGIAFGNVLLLKKEEIVINRQNISTENIKTEINKFFNGRKKSVKQLTEIKIATGEKFGKKKEGIFEGHIMLLEDEELEKEIINLITEKKISAAEATKFIIEGQAKALEKIKDEYLKNRAIDVRDIGSRLLKNILNISIVDLNNIKNQVILISKDLTPSETAQINLKYILGFITDLGGPTSHTSIMARSLEIPAIVGTVNITKKVKNNDFIILDSLNNEIIINPSDQIINEKKQVERKYFFKKENLKKLRNLYATTTDGHNIKIGSNIGNIQDIYSAKKNGAECIGLYRTEFLFMGRNALPTENEQFQAYKEIAESMENKPVIIRTMDIGGDKDLPYMNLPKEENPFLGWRAIRISMDRKEILHAQLRAILRASAFGKIYILFPMIISVEEIRTLKIEVHKLQIQLKKEHLVFDENIKIGIMIETPASAIIADHLIKEVDFFSIGTNDLTQYTLAVDRGNDLISHLYNPISPSVIQLIKQVIDISHLHGKWTGMCGELAGDERVTTLLLGMGLDEFSMSSTSIPKIKEIIRKTSFSKSQELAKKVLKAATTKEILDLLNKFII.

His-189 acts as the Tele-phosphohistidine intermediate in catalysis. Positions 296 and 332 each coordinate phosphoenolpyruvate. Residues Glu-431 and Asp-455 each coordinate Mg(2+). Phosphoenolpyruvate contacts are provided by residues 454 to 455 (ND) and Arg-465. Catalysis depends on Cys-502, which acts as the Proton donor.

The protein belongs to the PEP-utilizing enzyme family. As to quaternary structure, homodimer. Requires Mg(2+) as cofactor.

The protein localises to the cytoplasm. The enzyme catalyses L-histidyl-[protein] + phosphoenolpyruvate = N(pros)-phospho-L-histidyl-[protein] + pyruvate. Functionally, general (non sugar-specific) component of the phosphoenolpyruvate-dependent sugar phosphotransferase system (sugar PTS). This major carbohydrate active-transport system catalyzes the phosphorylation of incoming sugar substrates concomitantly with their translocation across the cell membrane. Enzyme I transfers the phosphoryl group from phosphoenolpyruvate (PEP) to the phosphoryl carrier protein (HPr). This is Phosphoenolpyruvate-protein phosphotransferase (ptsI) from Buchnera aphidicola subsp. Schizaphis graminum (strain Sg).